A 276-amino-acid polypeptide reads, in one-letter code: Hydroxycinnamoyl-CoA hydratase-lyase (276 aa).

The acetyl-CoA site is built by Lys29, Ala68, Met70, and Leu72. Vanillin is bound at residue Tyr75. Residues Gly120, Ser142, and Trp146 each coordinate acetyl-CoA. Vanillin is bound by residues Gly151 and Tyr239.

This sequence belongs to the enoyl-CoA hydratase/isomerase family. As to quaternary structure, homohexamer; dimer of trimers.

It carries out the reaction (E)-feruloyl-CoA + H2O = vanillin + acetyl-CoA. It catalyses the reaction (E)-caffeoyl-CoA + H2O = 3,4-dihydroxybenzaldehyde + acetyl-CoA. The enzyme catalyses (E)-4-coumaroyl-CoA + H2O = 4-hydroxybenzaldehyde + acetyl-CoA. The catalysed reaction is (E)-feruloyl-CoA + H2O = 3-hydroxy-3-(4-hydroxy-3-methoxyphenyl)propanoyl-CoA. It carries out the reaction 3-hydroxy-3-(4-hydroxy-3-methoxyphenyl)propanoyl-CoA = vanillin + acetyl-CoA. It catalyses the reaction (E)-caffeoyl-CoA + H2O = 3-hydroxy-3-(3,4-dihydroxyphenyl)propanoyl-CoA. The enzyme catalyses 3-hydroxy-3-(3,4-dihydroxyphenyl)propanoyl-CoA = 3,4-dihydroxybenzaldehyde + acetyl-CoA. The catalysed reaction is (E)-4-coumaroyl-CoA + H2O = 3-hydroxy-3-(4-hydroxyphenyl)propanoyl-CoA. It carries out the reaction 3-hydroxy-3-(4-hydroxyphenyl)propanoyl-CoA = 4-hydroxybenzaldehyde + acetyl-CoA. Functionally, catalyzes the hydration of the acyl-CoA thioester of ferulic acid and the subsequent retro-aldol cleavage of the hydrated intermediate to yield vanillin (4-hydroxy-3-methoxy-benzaldehyde). The enzyme is also active with caffeoyl-CoA and 4-coumaroyl-CoA producing 3,4-dihydroxybenzaldehyde and 4-hydroxybenzaldehyde, respectively. The sequence is that of Hydroxycinnamoyl-CoA hydratase-lyase from Pseudomonas fluorescens.